The following is a 142-amino-acid chain: Phosphoribosyl-AMP cyclohydrolase (142 aa).

Asp85 lines the Mg(2+) pocket. A Zn(2+)-binding site is contributed by Cys86. The Mg(2+) site is built by Asp87 and Asp89. 2 residues coordinate Zn(2+): Cys102 and Cys109. Residues 120 to 142 (GEPPTPVGAGERQPASGTADAAP) form a disordered region.

It belongs to the PRA-CH family. As to quaternary structure, homodimer. It depends on Mg(2+) as a cofactor. Zn(2+) is required as a cofactor.

The protein resides in the cytoplasm. It carries out the reaction 1-(5-phospho-beta-D-ribosyl)-5'-AMP + H2O = 1-(5-phospho-beta-D-ribosyl)-5-[(5-phospho-beta-D-ribosylamino)methylideneamino]imidazole-4-carboxamide. Its pathway is amino-acid biosynthesis; L-histidine biosynthesis; L-histidine from 5-phospho-alpha-D-ribose 1-diphosphate: step 3/9. Catalyzes the hydrolysis of the adenine ring of phosphoribosyl-AMP. The polypeptide is Phosphoribosyl-AMP cyclohydrolase (Acidothermus cellulolyticus (strain ATCC 43068 / DSM 8971 / 11B)).